A 444-amino-acid polypeptide reads, in one-letter code: Crh-like protein 3 (444 aa).

Positions 1-19 (MVGKSTLLSVLASASVAFA) are cleaved as a signal peptide. A disulfide bridge links cysteine 27 with cysteine 34. One can recognise a GH16 domain in the interval 57–271 (SLESCVPEPV…WAGGEIDWNS (215 aa)). Glutamate 157 functions as the Nucleophile in the catalytic mechanism. Glutamate 161 acts as the Proton donor in catalysis. Glutamate 161 lines the chitin pocket. N-linked (GlcNAc...) asparagine glycosylation is found at asparagine 187 and asparagine 228. Positions 248 and 259 each coordinate chitin. Asparagine 315, asparagine 323, asparagine 336, and asparagine 371 each carry an N-linked (GlcNAc...) asparagine glycan. Serine 415 is lipidated: GPI-anchor amidated serine. The propeptide at 416–444 (ADSLVANQERVLKGSLFAGIVAVVAMMAL) is removed in mature form.

The protein belongs to the glycosyl hydrolase 16 family. CRH1 subfamily. In terms of assembly, forms homodimers as well as heterodimers with other crh protein members crh1 and crh2. Dimerization may be necessary for the transglycosylation activity.

Its subcellular location is the cell membrane. The enzyme catalyses Random endo-hydrolysis of N-acetyl-beta-D-glucosaminide (1-&gt;4)-beta-linkages in chitin and chitodextrins.. Dual chitinase/transglycosylase that plays a role in cell wall architecture. Chitinase and transglycosylase activities are coupled. Required for the polysaccharide cross-linking at the septa and the cell wall. More specifically, transfers chitin to 1,6-beta-glucan in the cell wall. This is Crh-like protein 3 from Botryotinia fuckeliana (strain B05.10) (Noble rot fungus).